The sequence spans 336 residues: RHOMBOID-like protein 12, mitochondrial (336 aa).

Residues 1–85 constitute a mitochondrion transit peptide; sequence MKAIFNRRVV…RGFFASALGN (85 aa). Helical transmembrane passes span 135–155, 185–205, 216–236, 254–274, 276–296, and 307–327; these read VVLG…VFNQ, IDIG…TSIA, LYLA…AYMA, PGLG…FLHP, ATLY…IFLI, and NSNI…IAWA. Ser259 serves as the catalytic Nucleophile. The active-site Charge relay system is His315.

This sequence belongs to the peptidase S54 family.

It localises to the mitochondrion membrane. Its function is as follows. Probable rhomboid-type serine protease that catalyzes intramembrane proteolysis. Unable to cleave either of the yeast Pcp1 substrates in yeast cells. This is RHOMBOID-like protein 12, mitochondrial from Arabidopsis thaliana (Mouse-ear cress).